Reading from the N-terminus, the 228-residue chain is Lipoprotein-releasing system ATP-binding protein LolD (228 aa).

In terms of domain architecture, ABC transporter spans 6 to 228 (IKCINLNKSY…ENNQIFNYES (223 aa)). 42–49 (GKSGSGKT) provides a ligand contact to ATP.

This sequence belongs to the ABC transporter superfamily. Lipoprotein translocase (TC 3.A.1.125) family.

The protein localises to the cell inner membrane. Usually LolD forms an ABC transporter complex with LolC and LolE involved in the translocation of lipoprotein, in an ATP-dependent manner. However, LolE is certainly not functional as it is frameshifted. The protein is Lipoprotein-releasing system ATP-binding protein LolD of Buchnera aphidicola subsp. Acyrthosiphon pisum (strain APS) (Acyrthosiphon pisum symbiotic bacterium).